The sequence spans 317 residues: Terpene synthase 3 (317 aa).

The DDxx(x)D/E motif motif lies at 96-101 (DDFYFE). Positions 223-231 (NDMVSFERE) match the NDxxSxxxD/E motif motif.

The protein belongs to the terpene synthase family.

In terms of biological role, terpene synthase that converts its substrate farnesyl diphosphate (FPP) into the sesquiterpene CAS 137235-51-9 as a major product. Is also able to convert FPP into 9-epi-(E)-caryophyllene, alpha-neoclovene, beta-neoclovene, and 3 yet unidentified sesquiterpenes. This Dictyostelium purpureum (Slime mold) protein is Terpene synthase 3.